We begin with the raw amino-acid sequence, 983 residues long: Chaperone protein ClpB3, mitochondrial (983 aa).

The transit peptide at 1 to 87 (MSRATAVSRL…LFHPTQAARY (87 aa)) directs the protein to the mitochondrion. Positions 97–240 (PGEFTEMAWE…KEAISAVRGS (144 aa)) constitute a Clp R domain. Repeat regions lie at residues 100-165 (FTEM…ISRQ) and 177-240 (IGSS…VRGS). The segment at 255–503 (LEKYGIDMTE…KLKMEITSKP (249 aa)) is i. 300 to 307 (GEPGVGKT) is a binding site for ATP. Residues 504-627 (IELDEVDREI…QQSGKSMLRE (124 aa)) adopt a coiled-coil conformation. The segment at 629-820 (VTDVDIAEIV…VIIMTSNIGS (192 aa)) is II. 703-710 (GPTGVGKT) contacts ATP.

This sequence belongs to the ClpA/ClpB family.

It localises to the mitochondrion. Its function is as follows. Molecular chaperone that may not be involved in heat stress response or tolerance. The sequence is that of Chaperone protein ClpB3, mitochondrial (CLPB3) from Oryza sativa subsp. japonica (Rice).